The primary structure comprises 456 residues: Na(+)-translocating NADH-quinone reductase subunit A (456 aa).

It belongs to the NqrA family. As to quaternary structure, composed of six subunits; NqrA, NqrB, NqrC, NqrD, NqrE and NqrF.

The enzyme catalyses a ubiquinone + n Na(+)(in) + NADH + H(+) = a ubiquinol + n Na(+)(out) + NAD(+). NQR complex catalyzes the reduction of ubiquinone-1 to ubiquinol by two successive reactions, coupled with the transport of Na(+) ions from the cytoplasm to the periplasm. NqrA to NqrE are probably involved in the second step, the conversion of ubisemiquinone to ubiquinol. The sequence is that of Na(+)-translocating NADH-quinone reductase subunit A from Rhodopirellula baltica (strain DSM 10527 / NCIMB 13988 / SH1).